We begin with the raw amino-acid sequence, 454 residues long: Zinc finger CCCH domain-containing protein 66 (454 aa).

Gly residues predominate over residues 1–23; that stretch reads MAAGAGAGGGGGEGDSNGGGTSP. Residues 1 to 30 are disordered; sequence MAAGAGAGGGGGEGDSNGGGTSPGGVSAAA. C3H1-type zinc fingers lie at residues 66–94, 111–139, 157–185, 318–346, and 364–392; these read RIGE…HPPN, RVGQ…HPRE, RPNE…HPQP, RPDQ…HPKE, and RPGE…HPMG. The tract at residues 405 to 454 is disordered; the sequence is DVSSMHYQLSPSPGHPGILLDGGSGRSHRVPQSDSQQIPSGDGNAEREAS. The segment covering 434–443 has biased composition (polar residues); sequence VPQSDSQQIP.

This Oryza sativa subsp. japonica (Rice) protein is Zinc finger CCCH domain-containing protein 66.